The primary structure comprises 284 residues: Pseudouridine-5'-phosphate glycosidase (284 aa).

The Proton donor role is filled by Glu-17. Substrate-binding residues include Lys-77 and Val-97. A Mn(2+)-binding site is contributed by Asp-126. Residue 128–130 coordinates substrate; sequence SQD. Catalysis depends on Lys-147, which acts as the Nucleophile.

It belongs to the pseudouridine-5'-phosphate glycosidase family. In terms of assembly, homotrimer. Mn(2+) serves as cofactor.

The enzyme catalyses D-ribose 5-phosphate + uracil = psi-UMP + H2O. Its function is as follows. Catalyzes the reversible cleavage of pseudouridine 5'-phosphate (PsiMP) to ribose 5-phosphate and uracil. Functions biologically in the cleavage direction, as part of a pseudouridine degradation pathway. The protein is Pseudouridine-5'-phosphate glycosidase of Thermotoga petrophila (strain ATCC BAA-488 / DSM 13995 / JCM 10881 / RKU-1).